We begin with the raw amino-acid sequence, 253 residues long: (S)-2-haloacid dehalogenase (253 aa).

Asp-8 acts as the Nucleophile in catalysis. Residues 9–10 (AY), Arg-39, and 114–115 (SN) contribute to the an (S)-2-haloacid site. Residues 171-176 (SSNGFD) are important for catalytic activity.

This sequence belongs to the HAD-like hydrolase superfamily. S-2-haloalkanoic acid dehalogenase family. Homodimer.

It catalyses the reaction an (S)-2-haloacid + H2O = a (2R)-2-hydroxycarboxylate + a halide anion + H(+). It carries out the reaction (S)-2-chloropropanoate + H2O = (R)-lactate + chloride + H(+). Its function is as follows. Catalyzes the hydrolytic dehalogenation of small (S)-2-haloalkanoic acids to yield the corresponding (R)-2-hydroxyalkanoic acids. Acts on acids of short chain lengths, C(2) to C(4), with inversion of configuration at C-2. Active with 2-halogenated carboxylic acids and converts only the S-isomer (or L-isomer) of 2-chloropropionic acid with inversion of configuration to produce R-lactate (or D-isomer). This chain is (S)-2-haloacid dehalogenase, found in Xanthobacter autotrophicus.